Consider the following 66-residue polypeptide: Large ribosomal subunit protein bL31 (66 aa).

Zn(2+) contacts are provided by cysteine 16, cysteine 18, cysteine 36, and cysteine 39.

It belongs to the bacterial ribosomal protein bL31 family. Type A subfamily. In terms of assembly, part of the 50S ribosomal subunit. The cofactor is Zn(2+).

Its function is as follows. Binds the 23S rRNA. In Pelobacter propionicus (strain DSM 2379 / NBRC 103807 / OttBd1), this protein is Large ribosomal subunit protein bL31.